The chain runs to 66 residues: Toxin Tppa2 (66 aa).

Residues 1–63 (KDGYLVGNDG…TWSRATNKCG (63 aa)) form the LCN-type CS-alpha/beta domain. Intrachain disulfides connect cysteine 11–cysteine 62, cysteine 15–cysteine 37, cysteine 23–cysteine 43, and cysteine 27–cysteine 45. At cysteine 62 the chain carries Cysteine amide.

The protein belongs to the long (4 C-C) scorpion toxin superfamily. Sodium channel inhibitor family. Beta subfamily. In terms of tissue distribution, expressed by the venom gland.

It is found in the secreted. In terms of biological role, beta toxins bind voltage-independently at site-4 of sodium channels (Nav) and shift the voltage of activation toward more negative potentials thereby affecting sodium channel activation and promoting spontaneous and repetitive firing. This is Toxin Tppa2 from Tityus pachyurus (Colombian scorpion).